The primary structure comprises 108 residues: Ig kappa chain V-V region HP R16.7 (108 aa).

Residues 1 to 23 (DIQMTQTTSSLSASLGDRVTISC) are framework-1. Cys-23 and Cys-88 are joined by a disulfide. Residues 24–34 (RASQDISNYLN) are complementarity-determining-1. The interval 35-49 (WYQQKPDGTVKLLIY) is framework-2. A complementarity-determining-2 region spans residues 50–56 (YTSRLHS). A framework-3 region spans residues 57–88 (GVPSRFSGSGSGTDYSLTISNLEQEDIATYFC). Positions 89 to 97 (QQGNSLPRT) are complementarity-determining-3. Residues 98 to 108 (FGGGTKLEIKR) are framework-4.

The chain is Ig kappa chain V-V region HP R16.7 from Mus musculus (Mouse).